The following is a 95-amino-acid chain: RING finger protein Z (95 aa).

The N-myristoyl glycine; by host moiety is linked to residue Gly2. The RING-type; atypical zinc finger occupies 38–74; sequence CKSCWFANKGLLKCSNHYLCLKCLTLMLRRSDYCGIC. The PTAP/PSAP motif motif lies at 88–91; that stretch reads PSAP.

Belongs to the arenaviridae Z protein family. As to quaternary structure, interacts with protein NP; this interaction probably directs the encapsidated genome to budding sites. Interacts (via RING domain) with polymerase L; this interaction inhibits viral transcription and replication, Z partially blocks the product exit tunnel for the releasing nascent RNA product. Interacts with the glycoprotein complex; this interaction plays a role in virion budding. Interacts with host eIF4E; this interaction results in eIF4E reduced affinity for its substrate, the 5'-m7 G cap structure. Interacts (via late-budding domain) with host TSG101; this interaction is essential for budding and release of viral particles. Interacts with host RPLP0; this interaction may serve to load ribosome-like particles inside the virion. Interacts with host PML; this interaction induces PML bodies redistribution in the cytoplasm upon viral infection. Myristoylation is required for the role of RING finger protein Z in assembly and budding.

It localises to the virion. Its subcellular location is the host cytoplasm. The protein localises to the host perinuclear region. The protein resides in the host cell membrane. Its function is as follows. Plays a crucial role in virion assembly and budding. Expressed late in the virus life cycle, it acts as an inhibitor of viral transcription and RNA synthesis by interacting with the viral polymerase L. Presumably recruits the NP encapsidated genome to cellular membranes at budding sites via direct interaction with NP. Plays critical roles in the final steps of viral release by interacting with host TSG101, a member of the vacuolar protein-sorting pathway and using other cellular host proteins involved in vesicle formation pathway. The budding of the virus progeny occurs after association of protein Z with the viral glycoprotein complex SSP-GP1-GP2 at the cell periphery, step that requires myristoylation of protein Z. Also selectively represses protein production by associating with host eIF4E. In cell-based minigenome assay, has an inhibitory effect on the ribonucleoprotein machinery (vRNP), which is responsible for the replication and transcription of the viral genome. This Neotoma (wood rats) protein is RING finger protein Z.